Here is a 429-residue protein sequence, read N- to C-terminus: Probable M18 family aminopeptidase 2 (429 aa).

3 residues coordinate Zn(2+): histidine 82, histidine 156, and histidine 401.

This sequence belongs to the peptidase M18 family. The cofactor is Zn(2+).

The polypeptide is Probable M18 family aminopeptidase 2 (Pseudomonas aeruginosa (strain LESB58)).